A 127-amino-acid chain; its full sequence is uncharacterized protein (127 aa).

The next 2 helical transmembrane spans lie at 42 to 62 and 78 to 98; these read LLISNFAGLGIAFIYCLIAFI and GLPIILCSTLMLVGNILYYFL.

It localises to the membrane. This is an uncharacterized protein from Schizosaccharomyces pombe (strain 972 / ATCC 24843) (Fission yeast).